The chain runs to 323 residues: MYQDYPGSFDTSSRGSSGSPGHPEPYSAGAAQQKFRVDMPGSGSAFIPTINAITTSQDLQWMVQPTVITSMSSPYSRSHPYSHPLPPLSSVAGHTALQRPGVIKTIGTTVGRRRRDEQLSPEEEEKRRIRRERNKLAAAKCRNRRRELTEKLQAETEVLEEEKSVLQKEIAELQKEKEKLEFMLVAHSPVCKISPEERRSPPTSSLQSVRTGASGAVVVKQEPVEEEIPSSSLVLDKAQRSVIKPISIAGGYYGEEALNTPIVVTSTPAITPGSSNLVFTYPNVLDQESPLSPSESCSKAHRRSSSSGDQSSDSLNSPTLLAL.

Positions 1-27 (MYQDYPGSFDTSSRGSSGSPGHPEPYS) are enriched in low complexity. Residues 1–31 (MYQDYPGSFDTSSRGSSGSPGHPEPYSAGAA) are disordered. The bZIP domain occupies 124-187 (EEKRRIRRER…EKLEFMLVAH (64 aa)). Positions 126 to 128 (KRR) are basic motif. The segment at 129–136 (IRRERNKL) is leucine-zipper. Disordered stretches follow at residues 194-214 (SPEERRSPPTSSLQSVRTGAS) and 288-323 (ESPLSPSESCSKAHRRSSSSGDQSSDSLNSPTLLAL). The span at 305-317 (SSSGDQSSDSLNS) shows a compositional bias: low complexity.

This sequence belongs to the bZIP family. Fos subfamily. Heterodimer with JUN.

It is found in the nucleus. The protein is Fos-related antigen 2 (FOSL2) of Gallus gallus (Chicken).